Here is a 243-residue protein sequence, read N- to C-terminus: Ribosomal RNA small subunit methyltransferase J (243 aa).

S-adenosyl-L-methionine contacts are provided by residues Glu112 to Arg113 and Asp164.

The protein belongs to the methyltransferase superfamily. RsmJ family.

It localises to the cytoplasm. It carries out the reaction guanosine(1516) in 16S rRNA + S-adenosyl-L-methionine = N(2)-methylguanosine(1516) in 16S rRNA + S-adenosyl-L-homocysteine + H(+). Its function is as follows. Specifically methylates the guanosine in position 1516 of 16S rRNA. This is Ribosomal RNA small subunit methyltransferase J from Legionella pneumophila (strain Paris).